The following is a 943-amino-acid chain: Isoleucine--tRNA ligase (943 aa).

Positions 59-69 match the 'HIGH' region motif; the sequence is PYANGQIHLGH. Glu577 provides a ligand contact to L-isoleucyl-5'-AMP. The short motif at 618-622 is the 'KMSKS' region element; that stretch reads KMSKS. Lys621 contributes to the ATP binding site. Cys906, Cys909, Cys926, and Cys929 together coordinate Zn(2+).

It belongs to the class-I aminoacyl-tRNA synthetase family. IleS type 1 subfamily. Monomer. The cofactor is Zn(2+).

The protein localises to the cytoplasm. It catalyses the reaction tRNA(Ile) + L-isoleucine + ATP = L-isoleucyl-tRNA(Ile) + AMP + diphosphate. Catalyzes the attachment of isoleucine to tRNA(Ile). As IleRS can inadvertently accommodate and process structurally similar amino acids such as valine, to avoid such errors it has two additional distinct tRNA(Ile)-dependent editing activities. One activity is designated as 'pretransfer' editing and involves the hydrolysis of activated Val-AMP. The other activity is designated 'posttransfer' editing and involves deacylation of mischarged Val-tRNA(Ile). The chain is Isoleucine--tRNA ligase from Xanthomonas axonopodis pv. citri (strain 306).